Here is a 572-residue protein sequence, read N- to C-terminus: NADH-ubiquinone oxidoreductase chain 5 (572 aa).

Helical transmembrane passes span phenylalanine 6–isoleucine 26, valine 44–isoleucine 64, isoleucine 86–isoleucine 106, serine 107–glutamine 127, valine 147–tyrosine 167, isoleucine 179–leucine 201, proline 208–arginine 230, methionine 234–methionine 254, isoleucine 268–tyrosine 288, leucine 291–glycine 311, serine 337–tyrosine 357, asparagine 372–phenylalanine 394, isoleucine 422–valine 442, phenylalanine 454–valine 474, leucine 479–phenylalanine 499, tryptophan 524–isoleucine 544, and phenylalanine 552–leucine 572.

It belongs to the complex I subunit 5 family.

The protein resides in the mitochondrion inner membrane. It carries out the reaction a ubiquinone + NADH + 5 H(+)(in) = a ubiquinol + NAD(+) + 4 H(+)(out). Core subunit of the mitochondrial membrane respiratory chain NADH dehydrogenase (Complex I) that is believed to belong to the minimal assembly required for catalysis. Complex I functions in the transfer of electrons from NADH to the respiratory chain. The immediate electron acceptor for the enzyme is believed to be ubiquinone. The polypeptide is NADH-ubiquinone oxidoreductase chain 5 (ND5) (Locusta migratoria (Migratory locust)).